Consider the following 283-residue polypeptide: Large ribosomal subunit protein uL2c (283 aa).

Residues glycine 229–aspartate 274 form a disordered region. The segment covering leucine 262 to lysine 271 has biased composition (basic residues).

Belongs to the universal ribosomal protein uL2 family. Part of the 50S ribosomal subunit.

It localises to the plastid. The protein is Large ribosomal subunit protein uL2c (rpl2) of Aneura mirabilis (Parasitic liverwort).